The sequence spans 382 residues: MTNESAHNTPTVKLACDLIAQPSVTPEDAHCQRMMIERLEAIGFKVENLRFGDVDNFWAIRGESGPILAFAGHTDVVPTGDLGKWATDPFTPTIKDGMLYGRGAADMKGSLAAMITACESFIAAHPNHTGRIAFLITSDEEGPAINGTVKVVEWLEARNEKIKWCLVGEPSSTTLVGDVIKNGRRGSLGAELIVKGVQGHVAYPHLAVNPIHMIAPALAEMASETWDNGNEFFPPTSFQVSNFNSGTGATNVVPGEANVVFNFRFSTELTADILKQRTHAILDKHNVNYDLKWNLSGEPFLTAEGELVAASVAAIKKITGRDTELSTAGGTSDGRFIAPTGAQVLELGPVNATIHQINECVSVDDLNTLSDIYCTMLTELLA.

A Zn(2+)-binding site is contributed by H73. D75 is an active-site residue. D106 is a binding site for Zn(2+). The active-site Proton acceptor is the E140. E141, E169, and H355 together coordinate Zn(2+).

Belongs to the peptidase M20A family. DapE subfamily. In terms of assembly, homodimer. It depends on Zn(2+) as a cofactor. Co(2+) is required as a cofactor.

It catalyses the reaction N-succinyl-(2S,6S)-2,6-diaminopimelate + H2O = (2S,6S)-2,6-diaminopimelate + succinate. The protein operates within amino-acid biosynthesis; L-lysine biosynthesis via DAP pathway; LL-2,6-diaminopimelate from (S)-tetrahydrodipicolinate (succinylase route): step 3/3. Catalyzes the hydrolysis of N-succinyl-L,L-diaminopimelic acid (SDAP), forming succinate and LL-2,6-diaminopimelate (DAP), an intermediate involved in the bacterial biosynthesis of lysine and meso-diaminopimelic acid, an essential component of bacterial cell walls. The polypeptide is Succinyl-diaminopimelate desuccinylase (Saccharophagus degradans (strain 2-40 / ATCC 43961 / DSM 17024)).